A 420-amino-acid chain; its full sequence is Aminoacyltransferase FemA (420 aa).

The protein belongs to the FemABX family. As to quaternary structure, homodimer. Interacts with FemB.

The protein localises to the cytoplasm. The enzyme catalyses beta-D-GlcNAc-(1-&gt;4)-Mur2Ac(oyl-L-Ala-D-isoglutaminyl-L-Lys-(N(6)-Gly)-D-Ala-D-Ala)-di-trans,octa-cis-undecaprenyl diphosphate + 2 glycyl-tRNA(Gly) = MurNAc-L-Ala-D-isoglutaminyl-L-Lys-(N(6)-tri-Gly)-D-Ala-D-Ala-diphospho-di-trans,octa-cis-undecaprenyl-GlcNAc + 2 tRNA(Gly) + 2 H(+). Its function is as follows. Catalyzes the formation of the pentaglycine interpeptide bridge, which is characteristic of the S.aureus peptidoglycan. Adds glycines 2 and 3 of the pentaglycine bridge, using glycyl-tRNA(Gly) as donor. Involved in resistance to methicillin. This chain is Aminoacyltransferase FemA (femA), found in Staphylococcus aureus (strain NCTC 8325 / PS 47).